A 184-amino-acid polypeptide reads, in one-letter code: Ras protein let-60 (184 aa).

10 to 17 (GDGGVGKS) provides a ligand contact to GTP. The Effector region signature appears at 32–40 (YDPTIEDSY). GTP is bound by residues 57-61 (DTAGQ) and 116-119 (NKCD). Position 181 is a cysteine methyl ester (cysteine 181). The S-farnesyl cysteine moiety is linked to residue cysteine 181. Positions 182–184 (QIM) are cleaved as a propeptide — removed in mature form.

Belongs to the small GTPase superfamily. Ras family. Interacts with soc-2. Interacts (in GTP-bound form) with plc-1 (via Ras-associating domain 1). Expressed in body wall muscles and in the nervous system including ganglion, nerve ring dorsal and ventral nerve cords, motor neurons and sensory tail neurons.

The protein localises to the cell membrane. The catalysed reaction is GTP + H2O = GDP + phosphate + H(+). Functionally, GTP-binding protein with GTPase activity. The level of let-60 controls the switch between vulval and hypodermal cell fates during C.elegans vulval induction. May stimulate the guanine nucleotide exchange factor (GEF) activity of rap-1. May induce nuclear condensation. This is Ras protein let-60 from Caenorhabditis elegans.